The primary structure comprises 459 residues: Nucleobindin-1 (459 aa).

The first 25 residues, 1-25 (MPTSVPRGAPFLLLPPLLMLSAVLA), serve as a signal peptide directing secretion. Position 85 is a phosphoserine (serine 85). Residue threonine 147 is modified to Phosphothreonine. Residues 149 to 217 (EARDLELLIQ…QQRRHREHPK (69 aa)) are a coiled coil. The DNA-binding element occupies 171 to 217 (HHEEFKRYEMLKEHERRRYLESLGEEQRKEAERKLQEQQRRHREHPK). The span at 192 to 209 (SLGEEQRKEAERKLQEQQ) shows a compositional bias: basic and acidic residues. The interval 192–220 (SLGEEQRKEAERKLQEQQRRHREHPKVNV) is disordered. The interval 227 to 320 (LKEVWEELDG…VTLEEFLAST (94 aa)) is binds to GNAI2 and GNAI3. EF-hand domains lie at 239–274 (PNRFNPKTFFILHDINSDGVLDEQELEALFTKELEK) and 291–326 (ERLRMREHVMKNVDTNQDRLVTLEEFLASTQRKEFG). Ca(2+) contacts are provided by aspartate 252, asparagine 254, aspartate 256, glutamate 263, aspartate 304, asparagine 306, aspartate 308, and glutamate 315. A GBA motif is present at residues 302–332 (NVDTNQDRLVTLEEFLASTQRKEFGETAEGW). Residues 340–407 (AYTEEELKRF…RKQQQQEQSA (68 aa)) adopt a coiled-coil conformation. At serine 368 the chain carries Phosphoserine. Positions 393–459 (LQMEQRKQQQ…VLPQLDSQHL (67 aa)) are disordered. Basic and acidic residues predominate over residues 433–445 (DQKDVPASEKKVP). Position 456 is a phosphoserine (serine 456).

This sequence belongs to the nucleobindin family. In terms of assembly, interacts (via GBA motif) with guanine nucleotide-binding protein G(i) alpha subunits GNAI1, GNAI2 and GNAI3 with higher affinity for GNAI1 and GNAI3 than for GNAI2. Preferentially interacts with inactive rather than active GNAI3. Interaction with GNAI3 is inhibited when NUCB1 binds calcium, probably due to a conformational change which renders the GBA motif inaccessible. In terms of tissue distribution, minor constituent of the mineralized matrix of bone. Detected in calvaria, rib cartilage, liver, kidney, spleen, brain, lung, skeletal and heart muscle with highest expression in calvaria and approximately half the amount in kidney, liver and brain.

Its subcellular location is the golgi apparatus. The protein resides in the cis-Golgi network membrane. It is found in the cytoplasm. The protein localises to the secreted. Major calcium-binding protein of the Golgi which may have a role in calcium homeostasis. Acts as a non-receptor guanine nucleotide exchange factor which binds to and activates alpha subunits of guanine nucleotide-binding proteins (G proteins). The chain is Nucleobindin-1 (Nucb1) from Rattus norvegicus (Rat).